The primary structure comprises 363 residues: MRLVISGGGTGGHIYPALALIEALKAEGKLDDVLYVGTKRGLESRIVPATGLKFATLDLQGFKRSLSLSNFTTVRKFLGSLGEAKKLLQDFQPDIVVGTGGYVSGAILFAATRLHIPTVIHESNSVAGVTNKFLSHFVDRVAIVFPEVAKAFPANKVVVTGNPRAQQVAGLKPNDRLRDFGLDPHIRTLLAFGGSRGAPRINDAVVAALPIWAKADFQVLFATGRTHYDQIKAKLPDLPATIKVVPYIDDMPSILPDIGLLISRAGATTLAEITALGIPAVLIPSPNVTHHHQFLNAQSLTKQGAAITITEDELDNHFPRRVVTLMEDDEKRAAMAKASKKLGVPDASDQLIAVMTTLLSKRR.

Residues 10-12 (TGG), asparagine 124, serine 195, isoleucine 248, and glutamine 293 contribute to the UDP-N-acetyl-alpha-D-glucosamine site.

It belongs to the glycosyltransferase 28 family. MurG subfamily.

Its subcellular location is the cell membrane. The catalysed reaction is Mur2Ac(oyl-L-Ala-gamma-D-Glu-L-Lys-D-Ala-D-Ala)-di-trans,octa-cis-undecaprenyl diphosphate + UDP-N-acetyl-alpha-D-glucosamine = beta-D-GlcNAc-(1-&gt;4)-Mur2Ac(oyl-L-Ala-gamma-D-Glu-L-Lys-D-Ala-D-Ala)-di-trans,octa-cis-undecaprenyl diphosphate + UDP + H(+). Its pathway is cell wall biogenesis; peptidoglycan biosynthesis. Functionally, cell wall formation. Catalyzes the transfer of a GlcNAc subunit on undecaprenyl-pyrophosphoryl-MurNAc-pentapeptide (lipid intermediate I) to form undecaprenyl-pyrophosphoryl-MurNAc-(pentapeptide)GlcNAc (lipid intermediate II). The protein is UDP-N-acetylglucosamine--N-acetylmuramyl-(pentapeptide) pyrophosphoryl-undecaprenol N-acetylglucosamine transferase of Lacticaseibacillus casei (strain BL23) (Lactobacillus casei).